We begin with the raw amino-acid sequence, 245 residues long: DNA repair protein RecO (245 aa).

The protein belongs to the RecO family.

Functionally, involved in DNA repair and RecF pathway recombination. The sequence is that of DNA repair protein RecO from Klebsiella pneumoniae (strain 342).